The primary structure comprises 312 residues: Olfactory receptor 1D5 (312 aa).

At 1 to 25 the chain is on the extracellular side; it reads MDGDNQSENSQFLLLGISESPEQQQ. The N-linked (GlcNAc...) asparagine glycan is linked to N5. The helical transmembrane segment at 26–49 threads the bilayer; sequence ILFWMFLSMYLVTVLGNVLIILAI. The Cytoplasmic portion of the chain corresponds to 50–57; it reads SSDSRLHT. A helical membrane pass occupies residues 58–79; sequence PMYFFLANLSFTDLFFVTNTIP. Residues 80-100 are Extracellular-facing; it reads KMLVNLQSQNKAISYAGCLTQ. C97 and C189 are disulfide-bonded. A helical transmembrane segment spans residues 101-120; the sequence is LYFLVSLVTLDNLILAVMAY. At 121–140 the chain is on the cytoplasmic side; that stretch reads DRYVAICCPLHYVTAMSPGL. A helical membrane pass occupies residues 141–158; sequence CVLLLSLCWGLSVFYGLL. Residues 159-196 are Extracellular-facing; sequence LTLLLTRVTFCGPREIHYLFCDMYILLRLACSNTHIIH. Residues 197–220 traverse the membrane as a helical segment; that stretch reads TVLVATGCFIFLTPLGFMTTSYVR. Topologically, residues 221-237 are cytoplasmic; that stretch reads IVRTILQIPSASKKYKA. The chain crosses the membrane as a helical span at residues 238-260; that stretch reads FSTCASHLGVVSLFYGTLAMVYL. At 261-271 the chain is on the extracellular side; it reads QPLHTYSMKDS. Residues 272–291 traverse the membrane as a helical segment; it reads VATVMYAVVTPMMNPFIHSL. Over 292–312 the chain is Cytoplasmic; the sequence is RNKDMHGALGRVLRRLFQRPK.

Belongs to the G-protein coupled receptor 1 family.

It localises to the cell membrane. In terms of biological role, odorant receptor. The sequence is that of Olfactory receptor 1D5 (OR1D5) from Pan troglodytes (Chimpanzee).